The following is a 587-amino-acid chain: Adenine deaminase (587 aa).

Belongs to the metallo-dependent hydrolases superfamily. Adenine deaminase family. Mn(2+) serves as cofactor.

The catalysed reaction is adenine + H2O + H(+) = hypoxanthine + NH4(+). The protein is Adenine deaminase of Shewanella halifaxensis (strain HAW-EB4).